The following is a 439-amino-acid chain: Trigger factor (439 aa).

The 86-residue stretch at 162–247 (GDTVTIDYVG…IHEVKAKQLP (86 aa)) folds into the PPIase FKBP-type domain.

Belongs to the FKBP-type PPIase family. Tig subfamily.

It is found in the cytoplasm. It carries out the reaction [protein]-peptidylproline (omega=180) = [protein]-peptidylproline (omega=0). Involved in protein export. Acts as a chaperone by maintaining the newly synthesized protein in an open conformation. Functions as a peptidyl-prolyl cis-trans isomerase. The protein is Trigger factor of Lactobacillus delbrueckii subsp. bulgaricus (strain ATCC 11842 / DSM 20081 / BCRC 10696 / JCM 1002 / NBRC 13953 / NCIMB 11778 / NCTC 12712 / WDCM 00102 / Lb 14).